We begin with the raw amino-acid sequence, 511 residues long: Neuronal acetylcholine receptor subunit alpha-2 (511 aa).

The signal sequence occupies residues 1-27; sequence MTLSHSALQFWTHLYLWCLLLVPAVLT. The Extracellular portion of the chain corresponds to 28 to 241; it reads QQGSHTHAED…VTYYFVIRRL (214 aa). 2 N-linked (GlcNAc...) asparagine glycosylation sites follow: Asn56 and Asn106. An intrachain disulfide couples Cys160 to Cys174. Asn212 carries an N-linked (GlcNAc...) asparagine glycan. Cys224 and Cys225 are oxidised to a cystine. 3 helical membrane passes run 242–266, 274–292, and 308–329; these read PLFY…VFYL, ITLC…LLIT, and YLLF…VLNV. Residues 330–484 lie on the Cytoplasmic side of the membrane; it reads HHRSPSTHNM…WKYVAMVVDR (155 aa). Residues 485–503 form a helical membrane-spanning segment; the sequence is IFLWLFIIVCFLGTIGLFL.

The protein belongs to the ligand-gated ion channel (TC 1.A.9) family. Acetylcholine receptor (TC 1.A.9.1) subfamily. Alpha-2/CHRNA2 sub-subfamily. Neuronal AChR seems to be composed of two different types of subunits: alpha and non-alpha (beta). CHRNA2/Alpha-2 subunit can be combined to CHRNB2/beta-2 or CHRNB4/beta-4 to give rise to functional receptors. The alpha-2:beta-2 nAChR complex is proposed to be a heteropentamer with two subtypes: LS (low agonist sensitivity) with a (alpha-2)3:(beta-2)2 and HS (high agonist sensitivity) with a (alpha-2)2:(beta-2)3 stoichiometry; the subtypes differ in their subunit binding interfaces which are involved in ligand binding.

Its subcellular location is the synaptic cell membrane. The protein resides in the cell membrane. It carries out the reaction Ca(2+)(in) = Ca(2+)(out). The enzyme catalyses K(+)(in) = K(+)(out). It catalyses the reaction Na(+)(in) = Na(+)(out). Functionally, component of neuronal acetylcholine receptors (nAChRs) that function as pentameric, ligand-gated cation channels with high calcium permeability among other activities. nAChRs are excitatory neurotrasnmitter receptors formed by a collection of nAChR subunits known to mediate synaptic transmission in the nervous system and the neuromuscular junction. Each nAchR subunit confers differential attributes to channel properties, including activation, deactivation and desensitization kinetics, pH sensitivity, cation permeability, and binding to allosteric modulators. CHRNA2 forms heteropentameric neuronal acetylcholine receptors with CHRNB2 and CHRNB4 and plays a role in nicotine dependence. The chain is Neuronal acetylcholine receptor subunit alpha-2 (Chrna2) from Rattus norvegicus (Rat).